Consider the following 1088-residue polypeptide: RNA-directed RNA polymerase (1088 aa).

The 187-residue stretch at 501-687 (LSYGDVTRFL…AKRYIAGGKI (187 aa)) folds into the RdRp catalytic domain.

This sequence belongs to the reoviridae RNA-directed RNA polymerase family. Interacts with VP3 (Potential). Interacts with VP2; this interaction activates VP1. Interacts with NSP5; this interaction is probably necessary for the formation of functional virus factories. Interacts with NSP2; this interaction is weak. The cofactor is Mg(2+).

It localises to the virion. The enzyme catalyses RNA(n) + a ribonucleoside 5'-triphosphate = RNA(n+1) + diphosphate. Functionally, RNA-directed RNA polymerase that is involved in both transcription and genome replication. Together with VP3 capping enzyme, forms an enzyme complex positioned near the channels situated at each of the five-fold vertices of the core. Following infection, the outermost layer of the virus is lost, leaving a double-layered particle (DLP) made up of the core and VP6 shell. VP1 then catalyzes the transcription of fully conservative plus-strand genomic RNAs that are extruded through the DLP's channels into the cytoplasm where they function as mRNAs for translation of viral proteins. One copy of each of the viral (+)RNAs is also recruited during core assembly, together with newly synthesized polymerase complexes and VP2. The polymerase of these novo-formed particles catalyzes the synthesis of complementary minus-strands leading to dsRNA formation. To do so, the polymerase specifically recognizes and binds 4 bases 5'-UGUG-3' in the conserved 3'-sequence of plus-strand RNA templates. VP2 presumably activates the autoinhibited VP1-RNA complex to coordinate packaging and genome replication. Once dsRNA synthesis is complete, the polymerase switches to the transcriptional mode, thus providing secondary transcription. The chain is RNA-directed RNA polymerase from Homo sapiens (Human).